Here is a 431-residue protein sequence, read N- to C-terminus: MLSCTTSTMPGMICKNSDLEFDLLKPCFYPEEDDIYFGGHNSTPPGEDIWKKFELLPTPRLSPDSALAEHSLEPVNWATEMLLPEADLWSNPGEEEVFGQGGLRGCTSNPIILQDCMWSGFSNPGKPESVVSEKLPGGYRSLAVGAGTLAPGAAAAASSAGHERSGTAGVGRGKAAWLTELSHLDLECVDPAVVFFPANKREPMPVPTIPTSTGSAISLGDHQGLSSSLEDFLSNSGSVEEGGEEIYVVMLEETQFSKTVSRLPTAAHQENAALSPGCAQSSELILKRYDLIQEQHNYAAPPLPYVDREDARPQKKPRSHTSLALKCVFRPKAPRLGSRNNSDWENIERRRNHNRMERQRRDIMRSSFLNLRDLVPELVHNEKAAKVVILKKATEYIHTLQADESKLLVERKKLYERQQQLLQKIKQYALC.

Phosphotyrosine; by Tyr-kinases is present on Tyr-36. In terms of domain architecture, bHLH spans 348-400 (ERRRNHNRMERQRRDIMRSSFLNLRDLVPELVHNEKAAKVVILKKATEYIHTL). The interval 400 to 421 (LQADESKLLVERKKLYERQQQL) is leucine-zipper.

Efficient DNA binding requires dimerization with another bHLH protein.

Its subcellular location is the nucleus. In terms of biological role, has apoptosis-inducing activity. The protein is Protein S-Myc (Mycs) of Mus musculus (Mouse).